Reading from the N-terminus, the 208-residue chain is N-(5'-phosphoribosyl)anthranilate isomerase (208 aa).

The protein belongs to the TrpF family.

The enzyme catalyses N-(5-phospho-beta-D-ribosyl)anthranilate = 1-(2-carboxyphenylamino)-1-deoxy-D-ribulose 5-phosphate. It participates in amino-acid biosynthesis; L-tryptophan biosynthesis; L-tryptophan from chorismate: step 3/5. This Lactiplantibacillus plantarum (strain ATCC BAA-793 / NCIMB 8826 / WCFS1) (Lactobacillus plantarum) protein is N-(5'-phosphoribosyl)anthranilate isomerase.